The sequence spans 368 residues: Probable dual-specificity RNA methyltransferase RlmN (368 aa).

Residue Glu100 is the Proton acceptor of the active site. In terms of domain architecture, Radical SAM core spans Gln106–Asp344. Residues Cys113 and Cys349 are joined by a disulfide bond. Cys120, Cys124, and Cys127 together coordinate [4Fe-4S] cluster. S-adenosyl-L-methionine is bound by residues Gly172–Glu173, Ser204, Ser227–His229, and Asn305. The S-methylcysteine intermediate role is filled by Cys349.

The protein belongs to the radical SAM superfamily. RlmN family. The cofactor is [4Fe-4S] cluster.

Its subcellular location is the cytoplasm. The catalysed reaction is adenosine(2503) in 23S rRNA + 2 reduced [2Fe-2S]-[ferredoxin] + 2 S-adenosyl-L-methionine = 2-methyladenosine(2503) in 23S rRNA + 5'-deoxyadenosine + L-methionine + 2 oxidized [2Fe-2S]-[ferredoxin] + S-adenosyl-L-homocysteine. It catalyses the reaction adenosine(37) in tRNA + 2 reduced [2Fe-2S]-[ferredoxin] + 2 S-adenosyl-L-methionine = 2-methyladenosine(37) in tRNA + 5'-deoxyadenosine + L-methionine + 2 oxidized [2Fe-2S]-[ferredoxin] + S-adenosyl-L-homocysteine. Its function is as follows. Specifically methylates position 2 of adenine 2503 in 23S rRNA and position 2 of adenine 37 in tRNAs. The protein is Probable dual-specificity RNA methyltransferase RlmN of Streptococcus agalactiae serotype Ia (strain ATCC 27591 / A909 / CDC SS700).